A 392-amino-acid chain; its full sequence is L-rhamnonate dehydratase (392 aa).

Histidine 22 and arginine 48 together coordinate substrate. Aspartate 214, glutamate 240, and glutamate 268 together coordinate Mg(2+). Catalysis depends on histidine 318, which acts as the Proton acceptor. Glutamate 338 contacts substrate.

The protein belongs to the mandelate racemase/muconate lactonizing enzyme family. RhamD subfamily. As to quaternary structure, homooctamer; tetramer of dimers. It depends on Mg(2+) as a cofactor.

The enzyme catalyses L-rhamnonate = 2-dehydro-3-deoxy-L-rhamnonate + H2O. Its function is as follows. Catalyzes the dehydration of L-rhamnonate to 2-keto-3-deoxy-L-rhamnonate (KDR). The protein is L-rhamnonate dehydratase of Burkholderia orbicola (strain MC0-3).